A 371-amino-acid polypeptide reads, in one-letter code: Glycosyltransferase 8 domain-containing protein 1 (371 aa).

Residues Met1–Asn7 lie on the Cytoplasmic side of the membrane. A helical; Signal-anchor for type II membrane protein membrane pass occupies residues Ile8 to Gly28. Over Leu29–Lys371 the chain is Lumenal. 2 N-linked (GlcNAc...) asparagine glycosylation sites follow: Asn103 and Asn257.

It belongs to the glycosyltransferase 8 family.

The protein localises to the membrane. The polypeptide is Glycosyltransferase 8 domain-containing protein 1 (GLT8D1) (Bos taurus (Bovine)).